We begin with the raw amino-acid sequence, 406 residues long: Leucine aminopeptidase 1 (406 aa).

The first 18 residues, 1–18, serve as a signal peptide directing secretion; that stretch reads MKVTNASLLALLLPAVSG. The propeptide occupies 19 to 94; it reads RFVETGEPDR…LRAMTASRKK (76 aa). An N-linked (GlcNAc...) asparagine glycan is attached at Asn186. Zn(2+) contacts are provided by His194, Asp213, Glu252, and Asp279. A glycan (N-linked (GlcNAc...) asparagine) is linked at Asn306. Cys328 and Cys332 form a disulfide bridge. Zn(2+) is bound at residue His361.

The protein belongs to the peptidase M28 family. M28E subfamily. In terms of assembly, monomer. Zn(2+) serves as cofactor.

The protein localises to the secreted. Its function is as follows. Extracellular aminopeptidase that allows assimilation of proteinaceous substrates. This chain is Leucine aminopeptidase 1 (LAP1), found in Chaetomium globosum (strain ATCC 6205 / CBS 148.51 / DSM 1962 / NBRC 6347 / NRRL 1970) (Soil fungus).